The sequence spans 306 residues: Probable cobalamin biosynthesis protein CobD (306 aa).

A run of 5 helical transmembrane segments spans residues Leu54 to Ile74, Ile88 to Ser108, Ile155 to Phe175, Ile215 to Ile235, and Ser286 to Met306.

This sequence belongs to the CobD/CbiB family.

Its subcellular location is the cell membrane. It participates in cofactor biosynthesis; adenosylcobalamin biosynthesis. Converts cobyric acid to cobinamide by the addition of aminopropanol on the F carboxylic group. The chain is Probable cobalamin biosynthesis protein CobD from Methanococcus maripaludis (strain C7 / ATCC BAA-1331).